The chain runs to 261 residues: Cytochrome c oxidase subunit 3 (261 aa).

Over 1–15 the chain is Mitochondrial matrix; that stretch reads MTHQTHAYHMVNPSP. The chain crosses the membrane as a helical span at residues 16–34; sequence WPLTGALSALLMTSGLAMW. Residues 35 to 40 lie on the Mitochondrial intermembrane side of the membrane; sequence FHFNSP. A helical membrane pass occupies residues 41-66; sequence SLLLIGLVTNTLTMYQWWRDIVREGT. Over 67 to 72 the chain is Mitochondrial matrix; it reads FQGHHT. Residues 73–105 form a helical membrane-spanning segment; the sequence is PIVQKGLRYGMILFIISEVFFFAGFFWAFYHSS. At 106-128 the chain is on the mitochondrial intermembrane side; sequence LAPTPELGGCWPPTGINPLNPLE. Residues 129–152 traverse the membrane as a helical segment; it reads VPLLNTSVLLASGVSITWAHHSLM. Residues 153 to 155 lie on the Mitochondrial matrix side of the membrane; that stretch reads EGN. The helical transmembrane segment at 156–183 threads the bilayer; the sequence is RKNMQQALAITILLGIYFTLLQASEYYE. Topologically, residues 184–190 are mitochondrial intermembrane; sequence TSFTISD. The chain crosses the membrane as a helical span at residues 191-223; sequence GVYGSTFFMATGFHGLHVIIGSTFLTVCLLRQF. The Mitochondrial matrix segment spans residues 224–232; that stretch reads NFHFTSNHH. A helical transmembrane segment spans residues 233 to 256; the sequence is FGFEAAAWYWHFVDVVWLFLYVSI. Over 257 to 261 the chain is Mitochondrial intermembrane; the sequence is YWWGS.

This sequence belongs to the cytochrome c oxidase subunit 3 family. As to quaternary structure, component of the cytochrome c oxidase (complex IV, CIV), a multisubunit enzyme composed of 14 subunits. The complex is composed of a catalytic core of 3 subunits MT-CO1, MT-CO2 and MT-CO3, encoded in the mitochondrial DNA, and 11 supernumerary subunits COX4I, COX5A, COX5B, COX6A, COX6B, COX6C, COX7A, COX7B, COX7C, COX8 and NDUFA4, which are encoded in the nuclear genome. The complex exists as a monomer or a dimer and forms supercomplexes (SCs) in the inner mitochondrial membrane with NADH-ubiquinone oxidoreductase (complex I, CI) and ubiquinol-cytochrome c oxidoreductase (cytochrome b-c1 complex, complex III, CIII), resulting in different assemblies (supercomplex SCI(1)III(2)IV(1) and megacomplex MCI(2)III(2)IV(2)).

It localises to the mitochondrion inner membrane. It carries out the reaction 4 Fe(II)-[cytochrome c] + O2 + 8 H(+)(in) = 4 Fe(III)-[cytochrome c] + 2 H2O + 4 H(+)(out). Component of the cytochrome c oxidase, the last enzyme in the mitochondrial electron transport chain which drives oxidative phosphorylation. The respiratory chain contains 3 multisubunit complexes succinate dehydrogenase (complex II, CII), ubiquinol-cytochrome c oxidoreductase (cytochrome b-c1 complex, complex III, CIII) and cytochrome c oxidase (complex IV, CIV), that cooperate to transfer electrons derived from NADH and succinate to molecular oxygen, creating an electrochemical gradient over the inner membrane that drives transmembrane transport and the ATP synthase. Cytochrome c oxidase is the component of the respiratory chain that catalyzes the reduction of oxygen to water. Electrons originating from reduced cytochrome c in the intermembrane space (IMS) are transferred via the dinuclear copper A center (CU(A)) of subunit 2 and heme A of subunit 1 to the active site in subunit 1, a binuclear center (BNC) formed by heme A3 and copper B (CU(B)). The BNC reduces molecular oxygen to 2 water molecules using 4 electrons from cytochrome c in the IMS and 4 protons from the mitochondrial matrix. In Oryctolagus cuniculus (Rabbit), this protein is Cytochrome c oxidase subunit 3 (MT-CO3).